Consider the following 444-residue polypeptide: Spermatogenesis-associated protein 1 (444 aa).

Residues 145–160 are compositionally biased toward basic and acidic residues; sequence GTIHRPDSLSLSKDEP. The disordered stretch occupies residues 145-229; it reads GTIHRPDSLS…DEGEEDDKAT (85 aa). Residues 268 to 403 are a coiled coil; it reads SLLKIEREKI…RKLDTDKMKL (136 aa).

Interacts with IFT20.

Its subcellular location is the cytoplasmic vesicle. It is found in the secretory vesicle. It localises to the acrosome. In Rattus norvegicus (Rat), this protein is Spermatogenesis-associated protein 1 (Spata1).